Consider the following 306-residue polypeptide: Acetaldehyde dehydrogenase 2/3 (306 aa).

Cysteine 130 (acyl-thioester intermediate) is an active-site residue. Residues 161–169 (SAGPGTRKN) and asparagine 272 each bind NAD(+).

It belongs to the acetaldehyde dehydrogenase family.

It catalyses the reaction acetaldehyde + NAD(+) + CoA = acetyl-CoA + NADH + H(+). This Azoarcus sp. (strain BH72) protein is Acetaldehyde dehydrogenase 2/3 (mhpF).